Here is a 2185-residue protein sequence, read N- to C-terminus: Genome polyprotein (2185 aa).

A lipid anchor (N-myristoyl glycine; by host) is attached at Gly2. Residues 2–1495 (GAQVSTQKTG…HVSRAFICLQ (1494 aa)) are Cytoplasmic-facing. The tract at residues 566-582 (FYQGPPGEAVERAIARV) is amphipathic alpha-helix. Catalysis depends on for protease 2A activity residues His872 and Asp890. 2 residues coordinate Zn(2+): Cys907 and Cys909. The active-site For protease 2A activity is the Cys961. Zn(2+) contacts are provided by Cys967 and His969. Residues 1101 to 1173 (NNNWLKKFTE…EQSAPSQSDQ (73 aa)) form a membrane-binding region. The interval 1101–1239 (NNNWLKKFTE…SPGAGKSVAT (139 aa)) is oligomerization. The tract at residues 1122–1126 (AVKIQ) is RNA-binding. Residues 1205 to 1361 (EKKMSNYIQF…SMYSQNGKIN (157 aa)) enclose the SF3 helicase domain. Residues Cys1369, Cys1381, and Cys1386 each contribute to the Zn(2+) site. The segment at 1369 to 1386 (CDEECCPVNFKRCCPLVC) adopts a C4-type; degenerate zinc-finger fold. The interval 1413 to 1420 (EYNHRHSV) is RNA-binding. An oligomerization region spans residues 1424-1429 (LEALFQ). An intramembrane segment occupies 1496 to 1511 (ALTTFVSVAGIIYIIY). The Cytoplasmic portion of the chain corresponds to 1512–2185 (KLFAGFQGAY…TLRRKWLDSF (674 aa)). Position 1521 is an O-(5'-phospho-RNA)-tyrosine (Tyr1521). One can recognise a Peptidase C3 domain in the interval 1541-1719 (GPAFEFAVAM…FSAALLKHYF (179 aa)). Residues His1580, Glu1611, and Cys1687 each act as for protease 3C activity in the active site. The RdRp catalytic domain occupies 1950–2066 (GHLIAFDYSG…SYPWPIDASL (117 aa)). Residues Asp1956 and Asp2052 each coordinate Mg(2+).

This sequence belongs to the picornaviruses polyprotein family. As to quaternary structure, interacts with capsid protein VP1 and capsid protein VP3 to form heterotrimeric protomers. In terms of assembly, interacts with capsid protein VP0, and capsid protein VP3 to form heterotrimeric protomers. Five protomers subsequently associate to form pentamers which serve as building blocks for the capsid. Interacts with capsid protein VP2, capsid protein VP3 and capsid protein VP4 following cleavage of capsid protein VP0. Interacts with capsid protein VP1 and capsid protein VP3 in the mature capsid. As to quaternary structure, interacts with capsid protein VP0 and capsid protein VP1 to form heterotrimeric protomers. Five protomers subsequently associate to form pentamers which serve as building blocks for the capsid. Interacts with capsid protein VP4 in the mature capsid. Interacts with protein 2C; this interaction may be important for virion morphogenesis. In terms of assembly, interacts with capsid protein VP1 and capsid protein VP3. Homodimer. As to quaternary structure, homohexamer; forms a hexameric ring structure with 6-fold symmetry characteristic of AAA+ ATPases. Interacts (via N-terminus) with host RTN3 (via reticulon domain); this interaction is important for viral replication. Interacts with capsid protein VP3; this interaction may be important for virion morphogenesis. In terms of assembly, interacts with protein 3CD. Homodimer. Interacts with host GBF1. Interacts (via GOLD domain) with host ACBD3 (via GOLD domain); this interaction allows the formation of a viral protein 3A/ACBD3 heterotetramer with a 2:2 stoichiometry, which will stimulate the recruitment of host PI4KB in order to synthesize PI4P at the viral RNA replication sites. As to quaternary structure, interacts with RNA-directed RNA polymerase. In terms of assembly, interacts with protein 3AB and with RNA-directed RNA polymerase. Interacts with Viral protein genome-linked and with protein 3CD. The cofactor is Mg(2+). Post-translationally, specific enzymatic cleavages in vivo by the viral proteases yield processing intermediates and the mature proteins. Myristoylation is required for the formation of pentamers during virus assembly. Further assembly of 12 pentamers and a molecule of genomic RNA generates the provirion. In terms of processing, during virion maturation, immature virions are rendered infectious following cleavage of VP0 into VP4 and VP2. This maturation seems to be an autocatalytic event triggered by the presence of RNA in the capsid and it is followed by a conformational change infectious virion. Post-translationally, myristoylation is required during RNA encapsidation and formation of the mature virus particle. VPg is uridylylated by the polymerase into VPg-pUpU. This acts as a nucleotide-peptide primer for the genomic RNA replication.

It localises to the virion. It is found in the host cytoplasm. Its subcellular location is the host cytoplasmic vesicle membrane. The protein localises to the host nucleus. The catalysed reaction is a ribonucleoside 5'-triphosphate + H2O = a ribonucleoside 5'-diphosphate + phosphate + H(+). It catalyses the reaction Selective cleavage of Tyr-|-Gly bond in the picornavirus polyprotein.. It carries out the reaction RNA(n) + a ribonucleoside 5'-triphosphate = RNA(n+1) + diphosphate. The enzyme catalyses Selective cleavage of Gln-|-Gly bond in the poliovirus polyprotein. In other picornavirus reactions Glu may be substituted for Gln, and Ser or Thr for Gly.. With respect to regulation, replication or transcription is subject to high level of random mutations by the nucleotide analog ribavirin. Its function is as follows. Forms an icosahedral capsid of pseudo T=3 symmetry with capsid proteins VP2 and VP3. The capsid is 300 Angstroms in diameter, composed of 60 copies of each capsid protein and enclosing the viral positive strand RNA genome. Capsid protein VP1 mainly forms the vertices of the capsid. Capsid protein VP1 interacts with host cell receptor to provide virion attachment to target host cells. This attachment induces virion internalization. Tyrosine kinases are probably involved in the entry process. After binding to its receptor, the capsid undergoes conformational changes. Capsid protein VP1 N-terminus (that contains an amphipathic alpha-helix) and capsid protein VP4 are externalized. Together, they shape a pore in the host membrane through which viral genome is translocated to host cell cytoplasm. Functionally, forms an icosahedral capsid of pseudo T=3 symmetry with capsid proteins VP2 and VP3. The capsid is 300 Angstroms in diameter, composed of 60 copies of each capsid protein and enclosing the viral positive strand RNA genome. Lies on the inner surface of the capsid shell. After binding to the host receptor, the capsid undergoes conformational changes. Capsid protein VP4 is released, Capsid protein VP1 N-terminus is externalized, and together, they shape a pore in the host membrane through which the viral genome is translocated into the host cell cytoplasm. In terms of biological role, component of immature procapsids, which is cleaved into capsid proteins VP4 and VP2 after maturation. Allows the capsid to remain inactive before the maturation step. Its function is as follows. Cysteine protease that cleaves viral polyprotein and specific host proteins. It is responsible for the autocatalytic cleavage between the P1 and P2 regions, which is the first cleavage occurring in the polyprotein. Also cleaves the host translation initiation factor EIF4G1, in order to shut down the capped cellular mRNA translation. Inhibits the host nucleus-cytoplasm protein and RNA trafficking by cleaving host members of the nuclear pores. Counteracts stress granule formation probably by antagonizing its assembly or promoting its dissassembly. Cleaves and inhibits host IFIH1/MDA5, thereby inhibiting the type-I IFN production and the establishment of the antiviral state. Cleaves and inhibits host MAVS, thereby inhibiting the type-I IFN production and the establishment of the antiviral state. Functionally, plays an essential role in the virus replication cycle by acting as a viroporin. Creates a pore in the host endoplasmic reticulum and as a consequence releases Ca2+ in the cytoplasm of infected cell. In turn, high levels of cytoplasmic calcium may trigger membrane trafficking and transport of viral ER-associated proteins to viroplasms, sites of viral genome replication. Induces and associates with structural rearrangements of intracellular membranes. Displays RNA-binding, nucleotide binding and NTPase activities. May play a role in virion morphogenesis and viral RNA encapsidation by interacting with the capsid protein VP3. In terms of biological role, localizes the viral replication complex to the surface of membranous vesicles. Together with protein 3CD binds the Cis-Active RNA Element (CRE) which is involved in RNA synthesis initiation. Acts as a cofactor to stimulate the activity of 3D polymerase, maybe through a nucleid acid chaperone activity. Its function is as follows. Localizes the viral replication complex to the surface of membranous vesicles. It inhibits host cell endoplasmic reticulum-to-Golgi apparatus transport and causes the disassembly of the Golgi complex, possibly through GBF1 interaction. This would result in depletion of MHC, trail receptors and IFN receptors at the host cell surface. Plays an essential role in viral RNA replication by recruiting ACBD3 and PI4KB at the viral replication sites, thereby allowing the formation of the rearranged membranous structures where viral replication takes place. Functionally, acts as a primer for viral RNA replication and remains covalently bound to viral genomic RNA. VPg is uridylylated prior to priming replication into VPg-pUpU. The oriI viral genomic sequence may act as a template for this. The VPg-pUpU is then used as primer on the genomic RNA poly(A) by the RNA-dependent RNA polymerase to replicate the viral genome. During genome replication, the VPg-RNA linkage is removed by the host TDP2, thereby accelerating replication. During the late stage of the replication cycle, host TDP2 is excluded from sites of viral RNA synthesis and encapsidation, allowing for the generation of progeny virions. Involved in the viral replication complex and viral polypeptide maturation. It exhibits protease activity with a specificity and catalytic efficiency that is different from protease 3C. Protein 3CD lacks polymerase activity. Protein 3CD binds to the 5'UTR of the viral genome. In terms of biological role, replicates the viral genomic RNA on the surface of intracellular membranes. May form linear arrays of subunits that propagate along a strong head-to-tail interaction called interface-I. Covalently attaches UMP to a tyrosine of VPg, which is used to prime RNA synthesis. The positive stranded RNA genome is first replicated at virus induced membranous vesicles, creating a dsRNA genomic replication form. This dsRNA is then used as template to synthesize positive stranded RNA genomes. ss(+)RNA genomes are either translated, replicated or encapsidated. Its function is as follows. Major viral protease that mediates proteolytic processing of the polyprotein. Cleaves host EIF5B, contributing to host translation shutoff. Also cleaves host PABPC1, contributing to host translation shutoff. Cleaves host NLRP1, triggers host N-glycine-mediated degradation of the autoinhibitory NLRP1 N-terminal fragment. This Homo sapiens (Human) protein is Genome polyprotein.